A 124-amino-acid polypeptide reads, in one-letter code: Large ribosomal subunit protein bL12 (124 aa).

The protein belongs to the bacterial ribosomal protein bL12 family. In terms of assembly, homodimer. Part of the ribosomal stalk of the 50S ribosomal subunit. Forms a multimeric L10(L12)X complex, where L10 forms an elongated spine to which 2 to 4 L12 dimers bind in a sequential fashion. Binds GTP-bound translation factors.

Functionally, forms part of the ribosomal stalk which helps the ribosome interact with GTP-bound translation factors. Is thus essential for accurate translation. The sequence is that of Large ribosomal subunit protein bL12 from Desulforamulus reducens (strain ATCC BAA-1160 / DSM 100696 / MI-1) (Desulfotomaculum reducens).